The chain runs to 917 residues: Glutamate receptor (917 aa).

An N-terminal signal peptide occupies residues 1 to 19 (MDTCVFPLVVLWISMRITS). Topologically, residues 20-556 (TLDEVPIGGI…HFFSFMEPLS (537 aa)) are extracellular. N-linked (GlcNAc...) asparagine glycans are attached at residues N62, N95, N121, N125, N229, N251, N261, N272, N418, N419, N424, and N491. The chain crosses the membrane as a helical span at residues 557–577 (SEIWMCIVFAYIGVSVVLFLV). Residues 578-631 (SRFSPNEWHLSEAHHSYIANDFSISNSLWFSLGAFMQQGCDISPRSMSGRIVGS) are Cytoplasmic-facing. The helical transmembrane segment at 632-652 (VWWFFTLIIISSYTANLAAFL) threads the bilayer. The Extracellular portion of the chain corresponds to 653-818 (TVERMLTPID…GAQSALTLAN (166 aa)). N775 carries N-linked (GlcNAc...) asparagine glycosylation. A helical membrane pass occupies residues 819 to 839 (VAGIFYILIGGLVVAVLSAAF). Over 840 to 917 (EFLYKSRMDS…FEDSNTHTEV (78 aa)) the chain is Cytoplasmic. The tract at residues 871–896 (HIDSEQKTTGNGTRRRSHNSVTYTYT) is disordered.

Belongs to the glutamate-gated ion channel (TC 1.A.10.1) family.

The protein localises to the cell membrane. It is found in the postsynaptic cell membrane. Functionally, receptor for glutamate. L-glutamate acts as an excitatory neurotransmitter at many synapses in the central nervous system. The postsynaptic actions of Glu are mediated by a variety of receptors. The sequence is that of Glutamate receptor from Lymnaea stagnalis (Great pond snail).